We begin with the raw amino-acid sequence, 348 residues long: Pyruvate dehydrogenase E1 component subunit alpha (348 aa).

A disordered region spans residues 1–21 (MAPRKSASVSSRKTAAKPAKK).

In terms of assembly, heterodimer of an alpha and a beta chain. The cofactor is thiamine diphosphate.

It carries out the reaction N(6)-[(R)-lipoyl]-L-lysyl-[protein] + pyruvate + H(+) = N(6)-[(R)-S(8)-acetyldihydrolipoyl]-L-lysyl-[protein] + CO2. Functionally, the pyruvate dehydrogenase complex catalyzes the overall conversion of pyruvate to acetyl-CoA and CO(2). It contains multiple copies of three enzymatic components: pyruvate dehydrogenase (E1), dihydrolipoamide acetyltransferase (E2) and lipoamide dehydrogenase (E3). The sequence is that of Pyruvate dehydrogenase E1 component subunit alpha (pdhA) from Rhizobium meliloti (strain 1021) (Ensifer meliloti).